The chain runs to 402 residues: Acetylornithine aminotransferase (402 aa).

Pyridoxal 5'-phosphate-binding positions include glycine 117–alanine 118 and phenylalanine 143. A N(2)-acetyl-L-ornithine-binding site is contributed by arginine 146. Aspartate 231–glutamine 234 is a pyridoxal 5'-phosphate binding site. Position 260 is an N6-(pyridoxal phosphate)lysine (lysine 260). A N(2)-acetyl-L-ornithine-binding site is contributed by threonine 288. Position 289 (threonine 289) interacts with pyridoxal 5'-phosphate.

The protein belongs to the class-III pyridoxal-phosphate-dependent aminotransferase family. ArgD subfamily. As to quaternary structure, homodimer. Pyridoxal 5'-phosphate is required as a cofactor.

It localises to the cytoplasm. The enzyme catalyses N(2)-acetyl-L-ornithine + 2-oxoglutarate = N-acetyl-L-glutamate 5-semialdehyde + L-glutamate. It functions in the pathway amino-acid biosynthesis; L-arginine biosynthesis; N(2)-acetyl-L-ornithine from L-glutamate: step 4/4. The protein is Acetylornithine aminotransferase of Corynebacterium efficiens (strain DSM 44549 / YS-314 / AJ 12310 / JCM 11189 / NBRC 100395).